Consider the following 193-residue polypeptide: 2',3'-cyclic-nucleotide 3'-phosphodiesterase (193 aa).

The active-site Proton donor/acceptor is the H40. T42 serves as a coordination point for substrate. The Proton donor/acceptor role is filled by H129. 2 residues coordinate substrate: S131 and Y134.

Belongs to the 2H phosphoesterase superfamily. CPD1 family.

The protein resides in the golgi apparatus. It carries out the reaction a nucleoside 2',3'-cyclic phosphate + H2O = a nucleoside 2'-phosphate + H(+). Its function is as follows. Involved in the metabolism of ADP-ribose 1',2'-cyclic phosphate which is produced as a consequence of tRNA splicing. This is 2',3'-cyclic-nucleotide 3'-phosphodiesterase (CPD1) from Phaeosphaeria nodorum (strain SN15 / ATCC MYA-4574 / FGSC 10173) (Glume blotch fungus).